Here is a 402-residue protein sequence, read N- to C-terminus: Centromere protein C (402 aa).

Residue Lys-1 forms a Glycyl lysine isopeptide (Lys-Gly) (interchain with G-Cter in SUMO2) linkage. Positions 1–12 are enriched in low complexity; the sequence is KSEQSSFSSSSS. Residues 1–118 form a disordered region; sequence KSEQSSFSSS…HQKSQMSVET (118 aa). Ser-5 carries the phosphoserine modification. Residues 25–42 carry the Nuclear localization signal motif; it reads QKPPAEKTNQSSKNIGKK. Basic residues predominate over residues 44–53; it reads APFKKQKRAN. Over residues 88–118 the composition is skewed to polar residues; it reads PNPSGDTGSSKNQDSMAAQNVHQKSQMSVET. Lys-186 is covalently cross-linked (Glycyl lysine isopeptide (Lys-Gly) (interchain with G-Cter in SUMO2)). Thr-193 is subject to Phosphothreonine. Residues 196–218 form an MIF2 homology domain II region; the sequence is VRRTMRTRSKPLEYWRGERIDYQ. A phosphoserine mark is found at Ser-222 and Ser-232. The short motif at 239–257 is the Nuclear localization signal element; sequence KRKAKGNLGRIITTANRKR. Lys-266 is covalently cross-linked (Glycyl lysine isopeptide (Lys-Gly) (interchain with G-Cter in SUMO2)). The segment at 349–402 is MIF2 homology domain III; that stretch reads LVFYVNLGYLLCTLHETPYIVTTGDSFYVPSGNYYNIKNLLNEERVLLFTQIKS.

Belongs to the CENP-C/MIF2 family. As to quaternary structure, oligomer. Component of the CENPA-NAC complex, at least composed of CENPA, CENPC, CENPH, CENPM, CENPN, CENPT and CENPU. The CENPA-NAC complex interacts with the CENPA-CAD complex, composed of CENPI, CENPK, CENPL, CENPO, CENPP, CENPQ, CENPR and CENPS. Binds to DAXX. Interacts with DNMT3B. Interacts directly with CENPA. Identified in a centromere complex containing histones H2A, H2B and H4, and at least CENPA, CENPB, CENPC, CENPT, CENPN, HJURP, SUPT16H, SSRP1 and RSF1. Interacts with MEIKIN.

The protein localises to the nucleus. It is found in the chromosome. Its subcellular location is the centromere. It localises to the kinetochore. Component of the CENPA-NAC (nucleosome-associated) complex, a complex that plays a central role in assembly of kinetochore proteins, mitotic progression and chromosome segregation. The CENPA-NAC complex recruits the CENPA-CAD (nucleosome distal) complex and may be involved in incorporation of newly synthesized CENPA into centromeres. CENPC recruits DNA methylation and DNMT3B to both centromeric and pericentromeric satellite repeats and regulates the histone code in these regions. The polypeptide is Centromere protein C (CENPC) (Ovis aries (Sheep)).